We begin with the raw amino-acid sequence, 463 residues long: Asparagine--tRNA ligase (463 aa).

The protein belongs to the class-II aminoacyl-tRNA synthetase family. As to quaternary structure, homodimer.

Its subcellular location is the cytoplasm. It catalyses the reaction tRNA(Asn) + L-asparagine + ATP = L-asparaginyl-tRNA(Asn) + AMP + diphosphate + H(+). This Desulfitobacterium hafniense (strain Y51) protein is Asparagine--tRNA ligase.